We begin with the raw amino-acid sequence, 553 residues long: Hyaluronan synthase 3 (553 aa).

At 1–15 (MPVQLTTALRVVGTS) the chain is on the cytoplasmic side. A helical transmembrane segment spans residues 16–36 (LFALAVLGGILAAYVTGYQFI). The Extracellular portion of the chain corresponds to 37-44 (HTEKHYLS). Residues 45-65 (FGLYGAILGLHLLIQSLFAFL) traverse the membrane as a helical segment. The Cytoplasmic segment spans residues 66–377 (EHRRMRRAGQ…NSLWFHKHHL (312 aa)). The chain crosses the membrane as a helical span at residues 378–398 (WMTYESVVTGFFPFFLIATVI). Topologically, residues 399-408 (QLFYRGRIWN) are extracellular. The chain crosses the membrane as a helical span at residues 409 to 429 (ILLFLLTVQLVGIIKATYACF). At 430–440 (LRGNAEMIFMS) the chain is on the cytoplasmic side. A helical transmembrane segment spans residues 441-461 (LYSLLYMSSLLPAKIFAIATI). Asparagine 462 carries an N-linked (GlcNAc...) asparagine glycan. The Extracellular portion of the chain corresponds to 462 to 473 (NKSGWGTSGRKT). The helical transmembrane segment at 474-494 (IVVNFIGLIPVSIWVAVLLGG) threads the bilayer. Residues 495-515 (LAYTAYCQDLFSETELAFLVS) lie on the Cytoplasmic side of the membrane. Residues 516 to 536 (GAILYGCYWVALLMLYLAIIA) form a helical membrane-spanning segment. Topologically, residues 537 to 553 (RRCGKKPEQYSLAFAEV) are extracellular.

The protein belongs to the NodC/HAS family. Homodimers. Forms heterodimers with HAS2 and HAS1. The cofactor is Mg(2+). In terms of processing, O-GlcNAcylation increases the hyaluronan synthase activity, HAS3 stability and its plasma membrane residence. The concentration of UDP-GlcNAc controls the level of O-GlcNAc modification.

It localises to the cell membrane. The protein resides in the golgi apparatus membrane. Its subcellular location is the golgi apparatus. The protein localises to the trans-Golgi network membrane. It is found in the early endosome. The enzyme catalyses [hyaluronan](n) + UDP-N-acetyl-alpha-D-glucosamine = N-acetyl-beta-D-glucosaminyl-(1-&gt;4)-[hyaluronan](n) + UDP + H(+). It carries out the reaction N-acetyl-beta-D-glucosaminyl-(1-&gt;4)-[hyaluronan](n) + UDP-alpha-D-glucuronate = [hyaluronan](n+1) + UDP + H(+). It participates in glycan biosynthesis; hyaluronan biosynthesis. With respect to regulation, the enzymatic activity depends on the availability of cytosolic levels of UDP-GlcUA and UDP-GlcNAc. Its function is as follows. Catalyzes the addition of GlcNAc or GlcUA monosaccharides to the nascent hyaluronan polymer. Therefore, it is essential to hyaluronan synthesis a major component of most extracellular matrices that has a structural role in tissues architectures and regulates cell adhesion, migration and differentiation. This is one of three isoenzymes responsible for cellular hyaluronan synthesis. This Homo sapiens (Human) protein is Hyaluronan synthase 3.